A 619-amino-acid polypeptide reads, in one-letter code: Telomere repeat-binding protein 3 (619 aa).

One can recognise a Ubiquitin-like domain in the interval 324 to 403 (VKLSIKSFRI…LDNLGFTLEP (80 aa)). An HTH myb-type domain is found at 504–563 (AQRRTRRPFSVTEVEALVQAVEELGTGRWRDVKLRAFEDADHRTYVDLKDKWKTLVHTAS). Positions 532–559 (WRDVKLRAFEDADHRTYVDLKDKWKTLV) form a DNA-binding region, H-T-H motif. The segment at 593-619 (QGKHQARGASKDPDMNRGGAFESGVSV) is disordered.

As to quaternary structure, homodimer and heterodimer with TRP1. As to expression, expressed ubiquitously. Highest expression in flowers and roots.

Its subcellular location is the nucleus. Functionally, binds specifically to the plant telomeric double-stranded DNA sequences. At least 2 repeats of telomeric sequences are required for binding. Induces DNA bending. This Arabidopsis thaliana (Mouse-ear cress) protein is Telomere repeat-binding protein 3 (TRP3).